A 185-amino-acid chain; its full sequence is Riboflavin kinase (185 aa).

Mg(2+) is bound by residues Thr-41 and Asn-43. Glu-122 serves as the catalytic Nucleophile.

It belongs to the flavokinase family. It depends on Zn(2+) as a cofactor. Mg(2+) is required as a cofactor.

It catalyses the reaction riboflavin + ATP = FMN + ADP + H(+). It functions in the pathway cofactor biosynthesis; FMN biosynthesis; FMN from riboflavin (ATP route): step 1/1. Functionally, catalyzes the phosphorylation of riboflavin (vitamin B2) to form flavin mononucleotide (FMN) coenzyme. This Kluyveromyces lactis (strain ATCC 8585 / CBS 2359 / DSM 70799 / NBRC 1267 / NRRL Y-1140 / WM37) (Yeast) protein is Riboflavin kinase (FMN1).